We begin with the raw amino-acid sequence, 398 residues long: Phosphoglycerate kinase (398 aa).

Substrate is bound by residues D21–N23, R36, H59–R62, R118, and R151. ATP is bound by residues K201, E323, and G353–T356.

The protein belongs to the phosphoglycerate kinase family. Monomer.

The protein localises to the cytoplasm. The enzyme catalyses (2R)-3-phosphoglycerate + ATP = (2R)-3-phospho-glyceroyl phosphate + ADP. It participates in carbohydrate degradation; glycolysis; pyruvate from D-glyceraldehyde 3-phosphate: step 2/5. In Ruegeria pomeroyi (strain ATCC 700808 / DSM 15171 / DSS-3) (Silicibacter pomeroyi), this protein is Phosphoglycerate kinase.